Reading from the N-terminus, the 282-residue chain is ATP phosphoribosyltransferase (282 aa).

It belongs to the ATP phosphoribosyltransferase family. Long subfamily. The cofactor is Mg(2+).

It localises to the cytoplasm. The enzyme catalyses 1-(5-phospho-beta-D-ribosyl)-ATP + diphosphate = 5-phospho-alpha-D-ribose 1-diphosphate + ATP. Its pathway is amino-acid biosynthesis; L-histidine biosynthesis; L-histidine from 5-phospho-alpha-D-ribose 1-diphosphate: step 1/9. Its activity is regulated as follows. Feedback inhibited by histidine. Functionally, catalyzes the condensation of ATP and 5-phosphoribose 1-diphosphate to form N'-(5'-phosphoribosyl)-ATP (PR-ATP). Has a crucial role in the pathway because the rate of histidine biosynthesis seems to be controlled primarily by regulation of HisG enzymatic activity. This Micrococcus luteus (strain ATCC 4698 / DSM 20030 / JCM 1464 / CCM 169 / CCUG 5858 / IAM 1056 / NBRC 3333 / NCIMB 9278 / NCTC 2665 / VKM Ac-2230) (Micrococcus lysodeikticus) protein is ATP phosphoribosyltransferase.